The sequence spans 819 residues: Nuclear pore complex protein Nup93 (819 aa).

Threonine 49 carries the phosphothreonine modification. A phosphoserine mark is found at serine 52, serine 66, serine 72, serine 75, serine 80, serine 430, and serine 767.

The protein belongs to the nucleoporin interacting component (NIC) family. As to quaternary structure, part of the nuclear pore complex (NPC). Component of the p62 complex, a complex composed of NUP62 and NUP54. Forms a complex with NUP35, NUP155, NUP205 and lamin B; the interaction with NUP35 is direct. Does not interact with TPR. Interacts with SMAD4 and IPO7; translocates SMAD4 to the nucleus through the NPC upon BMP7 stimulation resulting in activation of SMAD4 signaling.

The protein resides in the nucleus membrane. It localises to the nucleus. Its subcellular location is the nuclear pore complex. It is found in the nucleus envelope. Functionally, plays a role in the nuclear pore complex (NPC) assembly and/or maintenance. May anchor nucleoporins, but not NUP153 and TPR, to the NPC. During renal development, regulates podocyte migration and proliferation through SMAD4 signaling. The chain is Nuclear pore complex protein Nup93 (NUP93) from Pongo abelii (Sumatran orangutan).